The chain runs to 472 residues: 3-isopropylmalate dehydratase large subunit (472 aa).

3 residues coordinate [4Fe-4S] cluster: cysteine 352, cysteine 413, and cysteine 416.

This sequence belongs to the aconitase/IPM isomerase family. LeuC type 1 subfamily. As to quaternary structure, heterodimer of LeuC and LeuD. The cofactor is [4Fe-4S] cluster.

The catalysed reaction is (2R,3S)-3-isopropylmalate = (2S)-2-isopropylmalate. Its pathway is amino-acid biosynthesis; L-leucine biosynthesis; L-leucine from 3-methyl-2-oxobutanoate: step 2/4. In terms of biological role, catalyzes the isomerization between 2-isopropylmalate and 3-isopropylmalate, via the formation of 2-isopropylmaleate. The protein is 3-isopropylmalate dehydratase large subunit of Pseudomonas fluorescens (strain ATCC BAA-477 / NRRL B-23932 / Pf-5).